The sequence spans 360 residues: Pyrimidine monooxygenase RutA (360 aa).

Residues 49–50, asparagine 115, glutamate 124, 140–141, and serine 190 contribute to the FMN site; these read IK and RY.

Belongs to the NtaA/SnaA/DszA monooxygenase family. RutA subfamily.

The catalysed reaction is uracil + FMNH2 + NADH + O2 = (Z)-3-ureidoacrylate + FMN + NAD(+) + H2O + H(+). The enzyme catalyses thymine + FMNH2 + NADH + O2 = (Z)-2-methylureidoacrylate + FMN + NAD(+) + H2O + H(+). Its function is as follows. Catalyzes the pyrimidine ring opening between N-3 and C-4 by an unusual flavin hydroperoxide-catalyzed mechanism, adding oxygen atoms in the process to yield ureidoacrylate peracid, that immediately reacts with FMN forming ureidoacrylate and FMN-N(5)-oxide. The FMN-N(5)-oxide reacts spontaneously with NADH to produce FMN. Requires the flavin reductase RutF to regenerate FMN in vivo. This is Pyrimidine monooxygenase RutA from Bradyrhizobium sp. (strain BTAi1 / ATCC BAA-1182).